Consider the following 69-residue polypeptide: DNA gyrase inhibitor YacG (69 aa).

Zn(2+) contacts are provided by Cys13, Cys16, Cys32, and Cys36.

It belongs to the DNA gyrase inhibitor YacG family. As to quaternary structure, interacts with GyrB. Zn(2+) serves as cofactor.

Functionally, inhibits all the catalytic activities of DNA gyrase by preventing its interaction with DNA. Acts by binding directly to the C-terminal domain of GyrB, which probably disrupts DNA binding by the gyrase. The chain is DNA gyrase inhibitor YacG from Neisseria meningitidis serogroup A / serotype 4A (strain DSM 15465 / Z2491).